Reading from the N-terminus, the 289-residue chain is Protease HtpX (289 aa).

2 consecutive transmembrane segments (helical) span residues 4–24 (IMLF…VLNI) and 36–56 (LSGL…ISLM). Residue His-143 coordinates Zn(2+). Residue Glu-144 is part of the active site. His-147 is a binding site for Zn(2+). 2 helical membrane-spanning segments follow: residues 158–178 (LMQG…ANIV) and 192–212 (MVYF…ASFL). Glu-221 lines the Zn(2+) pocket.

This sequence belongs to the peptidase M48B family. Requires Zn(2+) as cofactor.

It is found in the cell inner membrane. The sequence is that of Protease HtpX from Vibrio campbellii (strain ATCC BAA-1116).